A 544-amino-acid polypeptide reads, in one-letter code: Chromatin assembly factor 1 subunit A (544 aa).

The span at 1-22 (MNSESVDSDVAASTSNKGNELC) shows a compositional bias: polar residues. 3 disordered regions span residues 1-52 (MNSE…EADE), 67-117 (IYNG…REQE), and 138-160 (QEQQ…AQRL). Low complexity predominate over residues 23 to 35 (SSSTDITSLSVSS). Residues 36–47 (PNESVIHSSHSA) show a composition bias toward polar residues. Residues 56-170 (KLSYEGNRKK…RQEQILNKER (115 aa)) form an interaction with DNA and pcn1/PCNA region. Residues 74–117 (AGKEKKLQKQRAQEERIRQKEAERLKREKERQQREQEKKLREQE) show a composition bias toward basic and acidic residues. Residues 76 to 176 (KEKKLQKQRA…NKERQQLKLN (101 aa)) adopt a coiled-coil conformation. The PCNA-interaction protein (PIP box) signature appears at 172-179 (QLKLNNFF). Residues 325–396 (SNVLLNPWLE…DKDSVNASNT (72 aa)) form an interaction with histones H3/H4 region. Over residues 351-388 (DEEDDGEDLESEDEEVDNSDDIVEDGDNAFVDDEDDDK) the composition is skewed to acidic residues. Residues 351 to 400 (DEEDDGEDLESEDEEVDNSDDIVEDGDNAFVDDEDDDKDSVNASNTHRSS) form a disordered region.

This sequence belongs to the RLF2 family. In terms of assembly, component of chromatin assembly factor 1 (CAF-1), composed of pcf1, pcf2 and pcf3. Interacts (via PIP motif) with pcn1/PCNA; the interaction is direct and occurs during S-phase. Interacts with swi6 at the G1/S-phase transition and early S-phase, but not in the G2 phase. The CAF-1 complex interacts with histone H3/H4 dimers.

Its subcellular location is the nucleus. Acts as a component of the histone chaperone complex chromatin assembly factor 1 (CAF-1), which assembles histone octamers onto DNA during replication and repair. CAF-1 performs the first step of the nucleosome assembly process, bringing newly synthesized histones H3 and H4 to replicating DNA; histones H2A/H2B can bind to this chromatin precursor subsequent to DNA replication to complete the histone octamer. Plays a role in the maintenance of heterochromatin. The protein is Chromatin assembly factor 1 subunit A of Schizosaccharomyces pombe (strain 972 / ATCC 24843) (Fission yeast).